The following is a 425-amino-acid chain: Putative type I restriction enzyme MjaX specificity subunit (425 aa).

Belongs to the type-I restriction system S methylase family.

Its function is as follows. A putative specificity (S) subunit of a type I restriction enzyme thought to recognize 5'-TAGN(6)TGC-3'; the other subunits are unknown. The sequence is that of Putative type I restriction enzyme MjaX specificity subunit from Methanocaldococcus jannaschii (strain ATCC 43067 / DSM 2661 / JAL-1 / JCM 10045 / NBRC 100440) (Methanococcus jannaschii).